We begin with the raw amino-acid sequence, 272 residues long: Indole-3-glycerol phosphate synthase (272 aa).

It belongs to the TrpC family.

It catalyses the reaction 1-(2-carboxyphenylamino)-1-deoxy-D-ribulose 5-phosphate + H(+) = (1S,2R)-1-C-(indol-3-yl)glycerol 3-phosphate + CO2 + H2O. It participates in amino-acid biosynthesis; L-tryptophan biosynthesis; L-tryptophan from chorismate: step 4/5. The chain is Indole-3-glycerol phosphate synthase from Mycolicibacterium smegmatis (strain ATCC 700084 / mc(2)155) (Mycobacterium smegmatis).